Consider the following 379-residue polypeptide: Reducing end xylose-releasing exo-oligoxylanase (379 aa).

The active-site Proton donor is the glutamate 66. Aspartate 259 serves as the catalytic Proton acceptor.

The protein belongs to the glycosyl hydrolase 8 (cellulase D) family.

The catalysed reaction is Hydrolysis of (1-&gt;4)-beta-D-xylose residues from the reducing end of oligosaccharides.. Its function is as follows. Hydrolyzes xylooligosaccharides with a degree of polymerization of greater than or equal to 3, releasing xylose from the reducing end. Has low activity on birchwood xylan, oat spelt xylan and arabinoxylan. This Bifidobacterium adolescentis (strain ATCC 15703 / DSM 20083 / NCTC 11814 / E194a) protein is Reducing end xylose-releasing exo-oligoxylanase.